The primary structure comprises 334 residues: Anthranilate phosphoribosyltransferase (334 aa).

5-phospho-alpha-D-ribose 1-diphosphate-binding positions include Gly-81, 84-85 (GD), Thr-89, 91-94 (NIST), 109-117 (KHGNRSVSS), and Ala-121. Gly-81 is an anthranilate binding site. A Mg(2+)-binding site is contributed by Ser-93. Residue Asn-112 participates in anthranilate binding. Arg-167 contributes to the anthranilate binding site. Mg(2+) is bound by residues Asp-225 and Glu-226.

This sequence belongs to the anthranilate phosphoribosyltransferase family. In terms of assembly, homodimer. Requires Mg(2+) as cofactor.

It carries out the reaction N-(5-phospho-beta-D-ribosyl)anthranilate + diphosphate = 5-phospho-alpha-D-ribose 1-diphosphate + anthranilate. The protein operates within amino-acid biosynthesis; L-tryptophan biosynthesis; L-tryptophan from chorismate: step 2/5. In terms of biological role, catalyzes the transfer of the phosphoribosyl group of 5-phosphorylribose-1-pyrophosphate (PRPP) to anthranilate to yield N-(5'-phosphoribosyl)-anthranilate (PRA). The sequence is that of Anthranilate phosphoribosyltransferase from Histophilus somni (strain 2336) (Haemophilus somnus).